The chain runs to 343 residues: Glyceraldehyde-3-phosphate dehydrogenase (343 aa).

NAD(+)-binding positions include serine 12–isoleucine 13 and glycine 114. Serine 143–asparagine 145 is a D-glyceraldehyde 3-phosphate binding site. Cysteine 144 (nucleophile) is an active-site residue. Arginine 172 provides a ligand contact to NAD(+). Position 198-199 (histidine 198–glycine 199) interacts with D-glyceraldehyde 3-phosphate. Residue glutamine 307 participates in NAD(+) binding.

This sequence belongs to the glyceraldehyde-3-phosphate dehydrogenase family. As to quaternary structure, homotetramer.

The protein localises to the cytoplasm. The catalysed reaction is D-glyceraldehyde 3-phosphate + phosphate + NADP(+) = (2R)-3-phospho-glyceroyl phosphate + NADPH + H(+). It carries out the reaction D-glyceraldehyde 3-phosphate + phosphate + NAD(+) = (2R)-3-phospho-glyceroyl phosphate + NADH + H(+). It participates in carbohydrate degradation; glycolysis; pyruvate from D-glyceraldehyde 3-phosphate: step 1/5. The sequence is that of Glyceraldehyde-3-phosphate dehydrogenase (gap) from Methanocaldococcus jannaschii (strain ATCC 43067 / DSM 2661 / JAL-1 / JCM 10045 / NBRC 100440) (Methanococcus jannaschii).